The sequence spans 659 residues: Centrosomal protein of 76 kDa (659 aa).

Ser-75 and Ser-83 each carry phosphoserine.

It belongs to the CEP76 family. Interacts with CCP110 and CEP97.

The protein localises to the cytoplasm. The protein resides in the cytoskeleton. It is found in the microtubule organizing center. It localises to the centrosome. Its subcellular location is the centriole. Functionally, centrosomal protein involved in regulation of centriole duplication. Required to limit centriole duplication to once per cell cycle by preventing centriole reduplication. The chain is Centrosomal protein of 76 kDa (Cep76) from Mus musculus (Mouse).